A 344-amino-acid chain; its full sequence is Dihydroorotase (344 aa).

Positions 13 and 15 each coordinate Zn(2+). Substrate is bound by residues 15 to 17 and Asn41; that span reads HVR. Residues Lys99, His136, and His174 each coordinate Zn(2+). Lys99 carries the post-translational modification N6-carboxylysine. Position 136 (His136) interacts with substrate. Residue Leu219 coordinates substrate. Asp247 is a Zn(2+) binding site. The active site involves Asp247. His251 and Ala263 together coordinate substrate.

This sequence belongs to the metallo-dependent hydrolases superfamily. DHOase family. Class II DHOase subfamily. As to quaternary structure, homodimer. The cofactor is Zn(2+).

It carries out the reaction (S)-dihydroorotate + H2O = N-carbamoyl-L-aspartate + H(+). It participates in pyrimidine metabolism; UMP biosynthesis via de novo pathway; (S)-dihydroorotate from bicarbonate: step 3/3. Its function is as follows. Catalyzes the reversible cyclization of carbamoyl aspartate to dihydroorotate. This Azoarcus sp. (strain BH72) protein is Dihydroorotase.